We begin with the raw amino-acid sequence, 906 residues long: Rho GTPase-activating protein gacJ (906 aa).

A disordered region spans residues 53–117 (LEGHLNPSSH…RDNSRSDNIR (65 aa)). Over residues 69 to 79 (NNNNNNNNNNN) the composition is skewed to low complexity. Basic and acidic residues predominate over residues 92–117 (SRSDSKHHNRENSKSDRDNSRSDNIR). The Rho-GAP domain maps to 161–348 (EELQSLYPDQ…YMLEYFNDIF (188 aa)). Disordered stretches follow at residues 368-415 (DTTS…SRSK), 452-864 (EIIP…SVLT), and 877-906 (ANQA…NINK). The span at 381 to 404 (NGGSPRTSNTPYQQQHQLSSQSMA) shows a compositional bias: polar residues. Over residues 461–487 (TTTTTTTTTNTTTTTTTTNTTPNNTTT) the composition is skewed to low complexity. Composition is skewed to pro residues over residues 494 to 510 (PVPP…PPNP) and 547 to 560 (QPPP…PSPP). Polar residues predominate over residues 565–574 (KPTSKSDFIP). Composition is skewed to low complexity over residues 575-597 (STNN…SIPK) and 613-629 (IEEP…TTTT). The segment covering 637-649 (FKNNGTISSGSKS) has biased composition (polar residues). 2 stretches are compositionally biased toward low complexity: residues 650–663 (NPNL…NQPL) and 683–694 (SKPITTTPTIKK). Residues 708 to 721 (PPSPSSSSPSPPHN) are compositionally biased toward pro residues. Composition is skewed to low complexity over residues 754 to 772 (PTIP…PTTP), 785 to 816 (PPIN…STPK), and 844 to 861 (SSPT…SSPS). The segment covering 880 to 890 (AKKNPLSNSGG) has biased composition (polar residues).

The protein resides in the cytoplasm. In terms of biological role, rho GTPase-activating protein involved in the signal transduction pathway. The sequence is that of Rho GTPase-activating protein gacJ (gacJ) from Dictyostelium discoideum (Social amoeba).